Consider the following 277-residue polypeptide: Large ribosomal subunit protein uL2 (277 aa).

Disordered regions lie at residues 36 to 55 (PLPK…RHHG) and 213 to 277 (WKGI…RKKK).

Belongs to the universal ribosomal protein uL2 family. In terms of assembly, part of the 50S ribosomal subunit. Forms a bridge to the 30S subunit in the 70S ribosome.

Its function is as follows. One of the primary rRNA binding proteins. Required for association of the 30S and 50S subunits to form the 70S ribosome, for tRNA binding and peptide bond formation. It has been suggested to have peptidyltransferase activity; this is somewhat controversial. Makes several contacts with the 16S rRNA in the 70S ribosome. The protein is Large ribosomal subunit protein uL2 of Staphylococcus aureus (strain bovine RF122 / ET3-1).